The following is a 776-amino-acid chain: Zinc finger CCCH-type antiviral protein 1 (776 aa).

Ala2 carries the post-translational modification N-acetylalanine. Residues 2–254 (ADPGVCCFIT…DRSKSRDRFL (253 aa)) form an N-terminal domain region. The short motif at 69–76 (RARVCRRK) is the Nuclear localization signal element. 4 consecutive C3H1-type zinc fingers follow at residues 73-86 (CRRK…DSLH), 88-110 (CKLN…KYSH), 150-172 (CKSY…ERLH), and 169-193 (ERLH…SHNL). A disordered region spans residues 221 to 249 (NKHARRNPPGTRAAHPHRRGGAHRDRSKS). Residues 224–254 (ARRNPPGTRAAHPHRRGGAHRDRSKSRDRFL) form a binding to EXOSC5 region. 4 positions are modified to phosphoserine; by GSK3-beta: Ser257, Ser262, Ser266, and Ser270. Ser274 carries the phosphoserine modification. The residue at position 278 (Thr278) is a Phosphothreonine. Ser283 is subject to Phosphoserine. The Nuclear export signal motif lies at 284-291 (LEDVSVDV). Residues 308-355 (PVSSKAAGVQGPSQMRASQEFSEDGNLDDIFSRNRSDSSSSRASAAKV) form a disordered region. Residues 318-327 (GPSQMRASQE) show a composition bias toward polar residues. Phosphoserine is present on residues Ser325, Ser351, and Ser398. A compositionally biased stretch (low complexity) spans 344–353 (DSSSSRASAA). Residues 405–406 (KK) carry the Nuclear localization signal motif. Positions 457–483 (WASASTHNAPNGSSQIMDETPNVSKSS) are disordered. A compositionally biased stretch (polar residues) spans 459–483 (SASTHNAPNGSSQIMDETPNVSKSS). Tyr501 carries the post-translational modification Phosphotyrosine. Positions 512 to 562 (LAVPGEATTPVQSNRLPQSPLSSSSHRAAASGSPGKNSTHTSVSPAIESSR) are disordered. Residues 523–546 (QSNRLPQSPLSSSSHRAAASGSPG) are compositionally biased toward low complexity. Phosphoserine occurs at positions 544 and 667. The WWE domain occupies 671 to 758 (YEEKPLSAVF…ASKTQRHVVR (88 aa)).

This sequence belongs to the ARTD/PARP family. As to quaternary structure, homodimer or homooligomer. Homooligomerization is essential for its antiviral activity. Interacts with EXOSC5. Interacts with EXOSC3, EXOSC7, DCP2 and DCP1A. Interacts with PARN in an RNA-independent manner. Interacts with XRN1 in an RNA-dependent manner. Interacts (via N-terminal domain) with DHX30 (via N-terminus) in an RNA-independent manner. Interacts (via N-terminal domain) with DDX17 in an RNA-independent manner. Post-translationally, phosphorylation at Ser-274 is essential for sequential phosphorylation of Ser-270, Ser-266, Ser-262 and Ser-257 by GSK3-beta. Phosphorylation by GSK3-beta enhances its antiviral activity. In terms of tissue distribution, expressed in the kidney and liver.

It is found in the cytoplasm. Its subcellular location is the nucleus. Its function is as follows. Antiviral protein which inhibits the replication of viruses by recruiting the cellular RNA degradation machineries to degrade the viral mRNAs. Binds to a ZAP-responsive element (ZRE) present in the target viral mRNA, recruits cellular poly(A)-specific ribonuclease PARN to remove the poly(A) tail, and the 3'-5' exoribonuclease complex exosome to degrade the RNA body from the 3'-end. It also recruits the decapping complex DCP1-DCP2 through RNA helicase p72 (DDX17) to remove the cap structure of the viral mRNA to initiate its degradation from the 5'-end. Its target viruses belong to families which include retroviridae: human immunodeficiency virus type 1 (HIV-1) and moloney and murine leukemia virus (MoMLV), filoviridae: ebola virus (EBOV) and marburg virus (MARV), togaviridae: sindbis virus (SINV) and Ross river virus (RRV). Specifically targets the multiply spliced but not unspliced or singly spliced HIV-1 mRNAs for degradation. The protein is Zinc finger CCCH-type antiviral protein 1 (Zc3hav1) of Rattus norvegicus (Rat).